We begin with the raw amino-acid sequence, 455 residues long: Golgi pH regulator (455 aa).

The next 4 membrane-spanning stretches (helical) occupy residues 46-66, 79-99, 111-131, and 150-170; these read ITFA…LGAL, LYVI…YFVV, LFAC…GDPF, and VGVI…VNCP. 2 N-linked (GlcNAc...) asparagine glycosylation sites follow: asparagine 180 and asparagine 243. The next 4 helical transmembrane spans lie at 290–310, 343–363, 378–398, and 425–445; these read GYFF…NIVF, ISFI…LITL, VIVL…VLLM, and WFDV…YLAH.

This sequence belongs to the Golgi pH regulator (TC 1.A.38) family. In terms of assembly, homotrimer.

Its subcellular location is the golgi apparatus membrane. It carries out the reaction iodide(out) = iodide(in). The enzyme catalyses chloride(in) = chloride(out). The catalysed reaction is bromide(in) = bromide(out). It catalyses the reaction fluoride(in) = fluoride(out). Its function is as follows. Voltage-gated channel that enables the transfer of anions such as iodide, chloride, bromide and fluoride which may function in counter-ion conductance and participates in Golgi acidification. In Salmo salar (Atlantic salmon), this protein is Golgi pH regulator.